A 296-amino-acid polypeptide reads, in one-letter code: Phosphatidylglycerol--prolipoprotein diacylglyceryl transferase (296 aa).

3 consecutive transmembrane segments (helical) span residues 17–37, 59–79, and 97–117; these read LAVR…IVVG, MMFY…VLFY, and GGMS…LFAW. Position 142 (Arg142) interacts with a 1,2-diacyl-sn-glycero-3-phospho-(1'-sn-glycerol). The next 2 membrane-spanning stretches (helical) occupy residues 230–250 and 265–285; these read MGAI…TVEF and LSMG…MMIW.

Belongs to the Lgt family.

The protein localises to the cell inner membrane. It carries out the reaction L-cysteinyl-[prolipoprotein] + a 1,2-diacyl-sn-glycero-3-phospho-(1'-sn-glycerol) = an S-1,2-diacyl-sn-glyceryl-L-cysteinyl-[prolipoprotein] + sn-glycerol 1-phosphate + H(+). The protein operates within protein modification; lipoprotein biosynthesis (diacylglyceryl transfer). In terms of biological role, catalyzes the transfer of the diacylglyceryl group from phosphatidylglycerol to the sulfhydryl group of the N-terminal cysteine of a prolipoprotein, the first step in the formation of mature lipoproteins. The sequence is that of Phosphatidylglycerol--prolipoprotein diacylglyceryl transferase from Burkholderia thailandensis (strain ATCC 700388 / DSM 13276 / CCUG 48851 / CIP 106301 / E264).